Here is a 94-residue protein sequence, read N- to C-terminus: Integration host factor subunit beta (94 aa).

This sequence belongs to the bacterial histone-like protein family. Heterodimer of an alpha and a beta chain.

In terms of biological role, this protein is one of the two subunits of integration host factor, a specific DNA-binding protein that functions in genetic recombination as well as in transcriptional and translational control. The protein is Integration host factor subunit beta of Edwardsiella ictaluri (strain 93-146).